The primary structure comprises 695 residues: Polyribonucleotide nucleotidyltransferase (695 aa).

Positions 486 and 492 each coordinate Mg(2+). The KH domain occupies 553 to 612; sequence PRMIVFKINPEKIRDVIGKGGATIRALTEETGTTIDIVDDGTVKIFSADKADGQEAKRRV. One can recognise an S1 motif domain in the interval 622–690; that stretch reads GKIYEGRVSR…KQGRVRLSVK (69 aa).

It belongs to the polyribonucleotide nucleotidyltransferase family. As to quaternary structure, component of the RNA degradosome, which is a multiprotein complex involved in RNA processing and mRNA degradation. The cofactor is Mg(2+).

The protein localises to the cytoplasm. It carries out the reaction RNA(n+1) + phosphate = RNA(n) + a ribonucleoside 5'-diphosphate. Functionally, involved in mRNA degradation. Catalyzes the phosphorolysis of single-stranded polyribonucleotides processively in the 3'- to 5'-direction. This Nitrosococcus oceani (strain ATCC 19707 / BCRC 17464 / JCM 30415 / NCIMB 11848 / C-107) protein is Polyribonucleotide nucleotidyltransferase.